The sequence spans 194 residues: Large ribosomal subunit protein eL15 (194 aa).

Positions Ser-164 to Lys-194 are disordered. Residues Pro-184–Lys-194 are compositionally biased toward basic residues.

This sequence belongs to the eukaryotic ribosomal protein eL15 family.

The chain is Large ribosomal subunit protein eL15 (rpl15e) from Methanocaldococcus jannaschii (strain ATCC 43067 / DSM 2661 / JAL-1 / JCM 10045 / NBRC 100440) (Methanococcus jannaschii).